Consider the following 201-residue polypeptide: uncharacterized protein (201 aa).

The disordered stretch occupies residues 53–74 (PKKNTAHKNSTTSTVASSGNTT). A compositionally biased stretch (polar residues) spans 59-74 (HKNSTTSTVASSGNTT). The region spanning 88–136 (AKRLSHKEVERRRREAISEGIKELANIVPGCEKNKGSILQRTAQYIRSL) is the bHLH domain.

The protein resides in the nucleus. This is an uncharacterized protein from Schizosaccharomyces pombe (strain 972 / ATCC 24843) (Fission yeast).